The chain runs to 414 residues: Trafficking protein particle complex subunit 13 (414 aa).

This sequence belongs to the TRAPPC13 family. Part of the multisubunit TRAPP (transport protein particle) complex.

The sequence is that of Trafficking protein particle complex subunit 13 (trappc13) from Xenopus laevis (African clawed frog).